A 158-amino-acid chain; its full sequence is Transcription elongation factor GreA (158 aa).

The protein belongs to the GreA/GreB family.

Necessary for efficient RNA polymerase transcription elongation past template-encoded arresting sites. The arresting sites in DNA have the property of trapping a certain fraction of elongating RNA polymerases that pass through, resulting in locked ternary complexes. Cleavage of the nascent transcript by cleavage factors such as GreA or GreB allows the resumption of elongation from the new 3'terminus. GreA releases sequences of 2 to 3 nucleotides. The chain is Transcription elongation factor GreA from Hamiltonella defensa subsp. Acyrthosiphon pisum (strain 5AT).